Here is a 163-residue protein sequence, read N- to C-terminus: Shikimate kinase (163 aa).

10 to 15 (GVGKTT) contacts ATP. Threonine 14 serves as a coordination point for Mg(2+). Substrate-binding residues include aspartate 28, arginine 52, and glycine 75. Arginine 116 is an ATP binding site. Arginine 134 provides a ligand contact to substrate.

It belongs to the shikimate kinase family. As to quaternary structure, monomer. The cofactor is Mg(2+).

It localises to the cytoplasm. It catalyses the reaction shikimate + ATP = 3-phosphoshikimate + ADP + H(+). The protein operates within metabolic intermediate biosynthesis; chorismate biosynthesis; chorismate from D-erythrose 4-phosphate and phosphoenolpyruvate: step 5/7. In terms of biological role, catalyzes the specific phosphorylation of the 3-hydroxyl group of shikimic acid using ATP as a cosubstrate. The sequence is that of Shikimate kinase from Streptococcus suis (strain 98HAH33).